We begin with the raw amino-acid sequence, 1400 residues long: MNQEIMNLFNPTTPAQVFDQIRISIASPEKILSWSYGEIKKPETINYRTFKPERDGLFCARIFGPIKDYECLCGKYKRMKYKGIICEKCSVEVTLSRVRRERMGHIELAAPVAHIWFLKSLPSRIGLLLDMTLKDLERILYFEYYVVLEPGLTALKDRQLLSEEEYLRAQDEYGQDSFTAMIGAEAIRELLKGLELEKLETHLRAEMQETDSDIKHKKLAKRLKIVEAFRFSGNKPEWMIMTVVPVIPPDLRPLVPLDGGRFATSDLNDLYRRVINRNNRLKRLMELRAPDIIIRNEKRMLQEAVDALFDNGRRGRVITGANKRPLKSLADMLKGKQGRFRQNLLGKRVDYSGRSVIVVGPELRLHQCGLPKKMALELFKPFIYSRLDAKGLSTTVKQAKKLVEKERPEVWDILDEVIREHPVLLNRAPTLHRLGIQAFEPVLIEGKAIQLHPLVCSAFNADFDGDQMAVHVPLSLEAQLEARVLMMSTNNILHPANGLPIIVPSQDIVLGLYYLSILREGLPGEGKLYGEMAEIEHALHSKVIHLHTKIKYRCEGMDEEGKPVTKWYETTAGRAMLGQVLPKHPRVPFDTINKLMTKKEISGVIDQVYRHCGQKETVIFCDRIMALGFYNAFKAGISFGKDDMVVPSSKWKIVEDTRTLAKEFEQQYNDGLITHGEKYNKVVDAWSKCTKKISEDMMTEISAVKKNPKGGEAQINSIFMMSNSGARGSQDQMRQLAGMRGLMAKPSGEIIETPIISNFKEGLSVLEYFNSTHGARKGLADTALKTANSGYLTRRLVDVAQDCIITADDCGTKLGIKMRAIIDAGTVVASLASRILGRTAGEDLREPSTNRIVVKRGTLMEESHVDALQQAGIQEVKIRSALTCELVNGICGKCYGRDLARGTPVNHGEAVGVIAAQSIGEPGTQLTMRTFHIGGAAQINEQSFIESNFDGKIVIKNKAIAKNSENLSVAMVRNMVVAVVDADGTERATHRIQYGARMRVDEGDMVKRGQRIAEWDPYTRPVLTEVEGIIGFEDLVEGQSISETLDESTGIAKRVVIDWRSTRGGADLRPAIVIKGKDGKVQKLARGGDARYMLSVDAILSVDVGSVVKSGDILARISTESAKTRDITGGLPRVAELFEARKPKDAAIIAEIAGTIRFGRDYKNKRRISIEPMDKEEETREYLIPKGKHIHLQDGDIVEKGDFIVEGNPAPHDILAIKGIEELAAYLVNEIQEVYRLQGVLINDKHIEVIVRQMLQKVEITDQGETDMISGEQIDKIEFDQINAKAKEEGKKIATGTPVLLGITKASLQTRSFFSAASFQETTRVLTEAAVNGKVDPLEGLKENVIVGRLIPAGTGASMSKIREVAIKRDKMILDEREKQAAAIVPTAPEAEPLALPTPE.

Zn(2+) is bound by residues Cys71, Cys73, Cys86, and Cys89. Mg(2+) is bound by residues Asp462, Asp464, and Asp466. The Zn(2+) site is built by Cys810, Cys884, Cys891, and Cys894.

It belongs to the RNA polymerase beta' chain family. In terms of assembly, the RNAP catalytic core consists of 2 alpha, 1 beta, 1 beta' and 1 omega subunit. When a sigma factor is associated with the core the holoenzyme is formed, which can initiate transcription. Mg(2+) serves as cofactor. Requires Zn(2+) as cofactor.

It carries out the reaction RNA(n) + a ribonucleoside 5'-triphosphate = RNA(n+1) + diphosphate. DNA-dependent RNA polymerase catalyzes the transcription of DNA into RNA using the four ribonucleoside triphosphates as substrates. The sequence is that of DNA-directed RNA polymerase subunit beta' from Rhodopseudomonas palustris (strain BisA53).